A 200-amino-acid chain; its full sequence is Pyridoxine/pyridoxamine 5'-phosphate oxidase (200 aa).

FMN contacts are provided by residues 48 to 53 (RMVLLK), 63 to 64 (YT), K70, and Q92. Substrate is bound at residue K53. Substrate contacts are provided by Y110, R114, and S118. FMN contacts are provided by residues 127–128 (QS) and W171. 177-179 (RLH) serves as a coordination point for substrate. Residue R181 coordinates FMN.

This sequence belongs to the pyridoxamine 5'-phosphate oxidase family. In terms of assembly, homodimer. It depends on FMN as a cofactor.

It catalyses the reaction pyridoxamine 5'-phosphate + O2 + H2O = pyridoxal 5'-phosphate + H2O2 + NH4(+). It carries out the reaction pyridoxine 5'-phosphate + O2 = pyridoxal 5'-phosphate + H2O2. The protein operates within cofactor metabolism; pyridoxal 5'-phosphate salvage; pyridoxal 5'-phosphate from pyridoxamine 5'-phosphate: step 1/1. Its pathway is cofactor metabolism; pyridoxal 5'-phosphate salvage; pyridoxal 5'-phosphate from pyridoxine 5'-phosphate: step 1/1. Catalyzes the oxidation of either pyridoxine 5'-phosphate (PNP) or pyridoxamine 5'-phosphate (PMP) into pyridoxal 5'-phosphate (PLP). This chain is Pyridoxine/pyridoxamine 5'-phosphate oxidase, found in Cereibacter sphaeroides (strain ATCC 17023 / DSM 158 / JCM 6121 / CCUG 31486 / LMG 2827 / NBRC 12203 / NCIMB 8253 / ATH 2.4.1.) (Rhodobacter sphaeroides).